Consider the following 962-residue polypeptide: IQ motif and SEC7 domain-containing protein 1 (962 aa).

Residues 1–96 (MACRRRYLSS…STSVLRKQAE (96 aa)) form a disordered region. The span at 8-19 (LSSLETGSSLST) shows a compositional bias: low complexity. Polar residues predominate over residues 30–39 (SSETGTSLDS). Residues serine 89, serine 105, and serine 107 each carry the phosphoserine modification. In terms of domain architecture, IQ spans 134–163 (TRHAARTIQTAFRQYQMNKNFERLRSSMSE). 3 positions are modified to phosphoserine: serine 180, serine 248, and serine 252. Disordered stretches follow at residues 264–292 (SEEV…HRKL), 311–333 (LSPP…DLRL), and 348–516 (KEDK…DSPA). The segment covering 273-292 (ARARDTEPKPGLHGMDHRKL) has biased composition (basic and acidic residues). Composition is skewed to basic and acidic residues over residues 365-375 (ERPEPRLRVEH) and 429-445 (LPRE…RPLE). The span at 470–488 (DSINSTSNSNDTINCSSES) shows a compositional bias: low complexity. Residues serine 511 and serine 514 each carry the phosphoserine modification. The 194-residue stretch at 516–709 (AFSNDVIRKR…IGIYERIRKR (194 aa)) folds into the SEC7 domain. The PH domain occupies 773 to 865 (HQREIFLFND…LRESVAEVQE (93 aa)). Serine 891 is subject to Phosphoserine. Position 910 is a phosphotyrosine (tyrosine 910). Positions 921-962 (LSSSLRDLSEAGKRGRRSSAGSLESNVEFQPFQPSQPPVLCS) are disordered. A phosphoserine mark is found at serine 923 and serine 924. The segment covering 939 to 948 (SAGSLESNVE) has biased composition (polar residues).

It belongs to the BRAG family. In terms of assembly, interacts with ARF1 and ARF6. Interacts with GRIA2; the interaction is required for ARF6 activation.

The protein localises to the cytoplasm. It is found in the nucleus. Its subcellular location is the postsynaptic density. It localises to the cytoplasmic vesicle. The protein resides in the secretory vesicle. The protein localises to the synaptic vesicle. Its function is as follows. Guanine nucleotide exchange factor for ARF1 and ARF6. Guanine nucleotide exchange factor activity is enhanced by lipid binding. Accelerates GTP binding by ARFs of all three classes. Guanine nucleotide exchange protein for ARF6, mediating internalization of beta-1 integrin. Involved in neuronal development. In neurons, plays a role in the control of vesicle formation by endocytoc cargo. Upon long term depression, interacts with GRIA2 and mediates the activation of ARF6 to internalize synaptic AMPAR receptors. The protein is IQ motif and SEC7 domain-containing protein 1 of Rattus norvegicus (Rat).